Consider the following 304-residue polypeptide: 6-dehydroglucose reductase (304 aa).

Residues Trp-28, Arg-29, and Asp-56 each coordinate NADP(+). Tyr-61 serves as the catalytic Proton donor. The D-glucose site is built by Tyr-61, His-133, and Arg-134. Ser-163, Asn-164, Gln-185, Ser-215, Leu-217, Gly-219, Gly-268, Ser-269, Gln-270, and Arg-274 together coordinate NADP(+).

The protein belongs to the aldo/keto reductase family.

The catalysed reaction is D-glucose + NADP(+) = 6-dehydro-D-glucose + NADPH + H(+). Functionally, part of the alkanesulfonate monooxygenase (sulfo-ASMO) pathway, a D-sulfoquinovose degradation pathway that enables the complete utilization of all carbons within sulfoquinovose (SQ) with concomitant production of inorganic sulfite. Catalyzes the NADP-dependent reduction of 6-dehydro-D-glucose to D-glucose. Can also catalyze the reversible reaction, the formation of 6-dehydro-D-glucose from D-glucose in the presence of NADP(+). In Novosphingobium aromaticivorans (strain ATCC 700278 / DSM 12444 / CCUG 56034 / CIP 105152 / NBRC 16084 / F199), this protein is 6-dehydroglucose reductase.